The chain runs to 748 residues: Photosystem I P700 chlorophyll a apoprotein A1 (748 aa).

Transmembrane regions (helical) follow at residues 69–92 (IFSA…FHGA), 155–178 (LYVT…FHYH), 194–218 (LNHH…HVSL), 290–308 (VAHH…GHMY), 345–368 (WHAN…HHMY), 384–410 (LSLF…IYMV), 432–454 (AIIS…LYIH), and 529–547 (FMVH…LILL). [4Fe-4S] cluster contacts are provided by cysteine 571 and cysteine 580. 2 helical membrane passes run 587–608 (HVFL…HFSW) and 662–684 (LSAY…MFLF). Histidine 673 is a chlorophyll a' binding site. Chlorophyll a-binding residues include methionine 681 and tyrosine 689. A phylloquinone-binding site is contributed by tryptophan 690. The helical transmembrane segment at 722–742 (AVGVAHYLLGGIATTWAFFLA) threads the bilayer.

This sequence belongs to the PsaA/PsaB family. In terms of assembly, the PsaA/B heterodimer binds the P700 chlorophyll special pair and subsequent electron acceptors. PSI consists of a core antenna complex that captures photons, and an electron transfer chain that converts photonic excitation into a charge separation. The eukaryotic PSI reaction center is composed of at least 11 subunits. P700 is a chlorophyll a/chlorophyll a' dimer, A0 is one or more chlorophyll a, A1 is one or both phylloquinones and FX is a shared 4Fe-4S iron-sulfur center. is required as a cofactor.

Its subcellular location is the plastid. It localises to the chloroplast thylakoid membrane. It catalyses the reaction reduced [plastocyanin] + hnu + oxidized [2Fe-2S]-[ferredoxin] = oxidized [plastocyanin] + reduced [2Fe-2S]-[ferredoxin]. Functionally, psaA and PsaB bind P700, the primary electron donor of photosystem I (PSI), as well as the electron acceptors A0, A1 and FX. PSI is a plastocyanin/cytochrome c6-ferredoxin oxidoreductase, converting photonic excitation into a charge separation, which transfers an electron from the donor P700 chlorophyll pair to the spectroscopically characterized acceptors A0, A1, FX, FA and FB in turn. Oxidized P700 is reduced on the lumenal side of the thylakoid membrane by plastocyanin or cytochrome c6. In Cyanidioschyzon merolae (strain NIES-3377 / 10D) (Unicellular red alga), this protein is Photosystem I P700 chlorophyll a apoprotein A1.